Here is a 1132-residue protein sequence, read N- to C-terminus: Ubiquitin carboxyl-terminal hydrolase 43 (1132 aa).

Residues 1 to 103 (MDPGVGNALG…GARPPGAQGL (103 aa)) are disordered. The segment covering 17–28 (RPRRRRSLRRLL) has biased composition (basic residues). Low complexity-rich tracts occupy residues 29 to 44 (NRFLLALGSRSRSGDS) and 63 to 78 (FACAPGPAPASAGSPG). A USP domain is found at 101–710 (QGLKNHGNTC…GAYILFYQKR (610 aa)). Cys110 functions as the Nucleophile in the catalytic mechanism. Catalysis depends on His668, which acts as the Proton acceptor. Arg746 carries the post-translational modification Asymmetric dimethylarginine. Disordered regions lie at residues 839–891 (RRRP…TGVP), 935–1008 (TVMP…RGQG), 1024–1044 (RTVRTESSPPAPPISLGSDRL), and 1057–1106 (RESP…GEQI). Basic and acidic residues predominate over residues 941–950 (GDEKPARPEG). The span at 958-967 (GSSQVGSQSS) shows a compositional bias: low complexity. The residue at position 970 (Ser970) is a Phosphoserine. Positions 994 to 1006 (AAMEERAPDKDRG) are enriched in basic and acidic residues.

Belongs to the peptidase C19 family.

It carries out the reaction Thiol-dependent hydrolysis of ester, thioester, amide, peptide and isopeptide bonds formed by the C-terminal Gly of ubiquitin (a 76-residue protein attached to proteins as an intracellular targeting signal).. Functionally, may recognize and hydrolyze the peptide bond at the C-terminal Gly of ubiquitin. Involved in the processing of poly-ubiquitin precursors as well as that of ubiquitinated proteins. In Mus musculus (Mouse), this protein is Ubiquitin carboxyl-terminal hydrolase 43 (Usp43).